The primary structure comprises 196 residues: DnaA initiator-associating protein DiaA (196 aa).

In terms of domain architecture, SIS spans 34 to 196; the sequence is LVQSLLNGNK…DNTLFPHQDD (163 aa).

It belongs to the SIS family. DiaA subfamily. Homotetramer; dimer of dimers.

In terms of biological role, required for the timely initiation of chromosomal replication via direct interactions with the DnaA initiator protein. In Yersinia pseudotuberculosis serotype O:1b (strain IP 31758), this protein is DnaA initiator-associating protein DiaA.